The following is a 250-amino-acid chain: MAEIAPLRVQLIAKTEFSAPPDVEWSTDADGGAALVEFAGRACYQSWSKPNPRTATNATYVRHIIDVGHFSVLEHASVSFYITGLSRSCTHELIRHRHFSYSQLSQRYVPENDAEVVAPPGIEDDPELLALFTAATDASRAAYTELLNRLEAKLADQGTSTLRRKQARQAARAVLPNATETRIVVTGNYRAWRHFIAMRASEHADVEIRRLAIECLRRLVAVAPQVFSDFEITALADGTEVATSPLATEV.

A ThyX domain is found at 7-233 (LRVQLIAKTE…PQVFSDFEIT (227 aa)). FAD is bound by residues Ser-71, 95 to 97 (RHR), and Gln-103. Residues 92–95 (ELIR), 103–107 (QLSQR), and Arg-172 each bind dUMP. The short motif at 95–105 (RHRHFSYSQLS) is the ThyX motif element. FAD contacts are provided by residues 188–190 (NYR) and His-194. Arg-199 is a dUMP binding site. The Involved in ionization of N3 of dUMP, leading to its activation role is filled by Arg-199.

It belongs to the thymidylate synthase ThyX family. Homotetramer. The cofactor is FAD.

It carries out the reaction dUMP + (6R)-5,10-methylene-5,6,7,8-tetrahydrofolate + NADPH + H(+) = dTMP + (6S)-5,6,7,8-tetrahydrofolate + NADP(+). The protein operates within pyrimidine metabolism; dTTP biosynthesis. Its function is as follows. Catalyzes the reductive methylation of 2'-deoxyuridine-5'-monophosphate (dUMP) to 2'-deoxythymidine-5'-monophosphate (dTMP) while utilizing 5,10-methylenetetrahydrofolate (mTHF) as the methyl donor, and NADPH and FADH(2) as the reductant. This chain is Flavin-dependent thymidylate synthase, found in Mycolicibacterium gilvum (strain PYR-GCK) (Mycobacterium gilvum (strain PYR-GCK)).